A 378-amino-acid chain; its full sequence is Lactosylceramide 1,3-N-acetyl-beta-D-glucosaminyltransferase (378 aa).

At 1 to 14 (MRMLVSGRRVKKWQ) the chain is on the cytoplasmic side. Residues 15–35 (LIIQLFATCFLASLMFFWEPI) form a helical; Signal-anchor for type II membrane protein membrane-spanning segment. The Lumenal portion of the chain corresponds to 36–378 (DNHIVSHMKS…DTYPCRAAFI (343 aa)). Asn59 carries an N-linked (GlcNAc...) asparagine glycan.

Belongs to the glycosyltransferase 31 family. In terms of tissue distribution, widely expressed. Highly expressed in lung, colon, placenta, testis, pituitary gland and cerebellum. Weakly expressed in brain, liver, spleen, lymph node and thymus.

The protein resides in the golgi apparatus membrane. It carries out the reaction a beta-D-Gal-(1-&gt;4)-beta-D-Glc-(1&lt;-&gt;1)-Cer(d18:1(4E)) + UDP-N-acetyl-alpha-D-glucosamine = a beta-D-GlcNAc-(1-&gt;3)-beta-D-Gal-(1-&gt;4)-beta-D-Glc-(1&lt;-&gt;1)-Cer(d18:1(4E)) + UDP + H(+). It catalyses the reaction a neolactoside nLc4Cer(d18:1(4E)) + UDP-N-acetyl-alpha-D-glucosamine = a neolactoside IV(3)-beta-GlcNAc-nLc4Cer(d18:1(4E)) + UDP + H(+). It participates in protein modification; protein glycosylation. In terms of biological role, beta-1,3-N-acetylglucosaminyltransferase that plays a key role in the synthesis of lacto- or neolacto-series carbohydrate chains on glycolipids, notably by participating in biosynthesis of HNK-1 and Lewis X carbohydrate structures. Has strong activity toward lactosylceramide (LacCer) and neolactotetraosylceramide (nLc(4)Cer; paragloboside), resulting in the synthesis of Lc(3)Cer and neolactopentaosylceramide (nLc(5)Cer), respectively. Probably plays a central role in regulating neolacto-series glycolipid synthesis during embryonic development. This is Lactosylceramide 1,3-N-acetyl-beta-D-glucosaminyltransferase from Homo sapiens (Human).